The primary structure comprises 1235 residues: Major DNA-binding protein (1235 aa).

Residues 536 to 584 form a disordered region; that stretch reads GGLDGKGDDGVPGGGAGGGGGRDVSGGPSDGLGGGRGGGGGGDSGGMMG. The segment covering 545–584 has biased composition (gly residues); sequence GVPGGGAGGGGGRDVSGGPSDGLGGGRGGGGGGDSGGMMG. Positions 846–847 match the Required for filament formation motif; that stretch reads FW. Residues 1214 to 1226 show a composition bias toward gly residues; it reads GVGGSSGGGGGSG. The segment at 1214–1235 is disordered; the sequence is GVGGSSGGGGGSGLLPAKRSRL. The required for nuclear localization stretch occupies residues 1232 to 1235; sequence RSRL.

This sequence belongs to the herpesviridae major DNA-binding protein family. As to quaternary structure, homooligomers. Forms double-helical filaments necessary for the formation of replication compartments within the host nucleus. Interacts with the origin-binding protein. Interacts with the helicase primase complex; this interaction stimulates primer synthesis activity of the helicase-primase complex. Interacts with the DNA polymerase. Interacts with the alkaline exonuclease; this interaction increases its nuclease processivity.

The protein localises to the host nucleus. Its function is as follows. Plays several crucial roles in viral infection. Participates in the opening of the viral DNA origin to initiate replication by interacting with the origin-binding protein. May disrupt loops, hairpins and other secondary structures present on ssDNA to reduce and eliminate pausing of viral DNA polymerase at specific sites during elongation. Promotes viral DNA recombination by performing strand-transfer, characterized by the ability to transfer a DNA strand from a linear duplex to a complementary single-stranded DNA circle. Can also catalyze the renaturation of complementary single strands. Additionally, reorganizes the host cell nucleus, leading to the formation of prereplicative sites and replication compartments. This process is driven by the protein which can form double-helical filaments in the absence of DNA. This Homo sapiens (Human) protein is Major DNA-binding protein.